Reading from the N-terminus, the 350-residue chain is GDSL esterase/lipase At2g42990 (350 aa).

A signal peptide spans 1–24 (MATHYLSPSILCIILTTLVSIAGA). The active-site Nucleophile is the Ser35. Residues Asn98, Asn117, and Asn141 are each glycosylated (N-linked (GlcNAc...) asparagine). Residues Asp325 and His328 contribute to the active site.

The protein belongs to the 'GDSL' lipolytic enzyme family.

It localises to the secreted. The sequence is that of GDSL esterase/lipase At2g42990 from Arabidopsis thaliana (Mouse-ear cress).